We begin with the raw amino-acid sequence, 258 residues long: Deoxyribose-phosphate aldolase (258 aa).

D102 functions as the Proton donor/acceptor in the catalytic mechanism. The active-site Schiff-base intermediate with acetaldehyde is the K165. Residue K199 is the Proton donor/acceptor of the active site.

This sequence belongs to the DeoC/FbaB aldolase family. DeoC type 2 subfamily.

Its subcellular location is the cytoplasm. The catalysed reaction is 2-deoxy-D-ribose 5-phosphate = D-glyceraldehyde 3-phosphate + acetaldehyde. Its pathway is carbohydrate degradation; 2-deoxy-D-ribose 1-phosphate degradation; D-glyceraldehyde 3-phosphate and acetaldehyde from 2-deoxy-alpha-D-ribose 1-phosphate: step 2/2. Catalyzes a reversible aldol reaction between acetaldehyde and D-glyceraldehyde 3-phosphate to generate 2-deoxy-D-ribose 5-phosphate. The sequence is that of Deoxyribose-phosphate aldolase from Aliivibrio fischeri (strain MJ11) (Vibrio fischeri).